A 290-amino-acid chain; its full sequence is Proteasome subunit beta (290 aa).

The propeptide at 1–58 (MTTSGGLTGPGAFGRLPQPFHQPGITSFVEFLALQAPDLLPGRLQMPAGGQPPEVPHG) is removed in mature form; by autocatalysis. Thr-59 (nucleophile) is an active-site residue.

It belongs to the peptidase T1B family. The 20S proteasome core is composed of 14 alpha and 14 beta subunits that assemble into four stacked heptameric rings, resulting in a barrel-shaped structure. The two inner rings, each composed of seven catalytic beta subunits, are sandwiched by two outer rings, each composed of seven alpha subunits. The catalytic chamber with the active sites is on the inside of the barrel. Has a gated structure, the ends of the cylinder being occluded by the N-termini of the alpha-subunits. Is capped by the proteasome-associated ATPase, ARC.

The protein localises to the cytoplasm. The enzyme catalyses Cleavage of peptide bonds with very broad specificity.. The protein operates within protein degradation; proteasomal Pup-dependent pathway. With respect to regulation, the formation of the proteasomal ATPase ARC-20S proteasome complex, likely via the docking of the C-termini of ARC into the intersubunit pockets in the alpha-rings, may trigger opening of the gate for substrate entry. Interconversion between the open-gate and close-gate conformations leads to a dynamic regulation of the 20S proteasome proteolysis activity. Component of the proteasome core, a large protease complex with broad specificity involved in protein degradation. The sequence is that of Proteasome subunit beta from Acidothermus cellulolyticus (strain ATCC 43068 / DSM 8971 / 11B).